Consider the following 783-residue polypeptide: uncharacterized protein (783 aa).

The segment at residues 40–66 (CFNCKARKVRCDGANPCKACASNNLEC) is a DNA-binding region (zn(2)-C6 fungal-type).

The protein resides in the cytoplasm. The protein localises to the nucleus. This is an uncharacterized protein from Schizosaccharomyces pombe (strain 972 / ATCC 24843) (Fission yeast).